The following is a 248-amino-acid chain: ATP synthase subunit a, chloroplastic (248 aa).

A run of 5 helical transmembrane segments spans residues G37–G57, V96–V116, I135–H155, L200–L220, and G221–G241.

This sequence belongs to the ATPase A chain family. F-type ATPases have 2 components, CF(1) - the catalytic core - and CF(0) - the membrane proton channel. CF(1) has five subunits: alpha(3), beta(3), gamma(1), delta(1), epsilon(1). CF(0) has four main subunits: a, b, b' and c.

It is found in the plastid. Its subcellular location is the chloroplast thylakoid membrane. Functionally, key component of the proton channel; it plays a direct role in the translocation of protons across the membrane. The protein is ATP synthase subunit a, chloroplastic of Staurastrum punctulatum (Green alga).